The primary structure comprises 369 residues: Phosphoribosyl pyrophosphate synthase-associated protein 2 (369 aa).

Position 1 is an N-acetylmethionine (M1). The residue at position 5 (T5) is a Phosphothreonine. Phosphoserine occurs at positions 219, 227, and 233.

It belongs to the ribose-phosphate pyrophosphokinase family. As to quaternary structure, binds to PRPS1 and PRPS2. Ubiquitous.

Functionally, seems to play a negative regulatory role in 5-phosphoribose 1-diphosphate synthesis. The sequence is that of Phosphoribosyl pyrophosphate synthase-associated protein 2 (PRPSAP2) from Homo sapiens (Human).